Reading from the N-terminus, the 134-residue chain is ATP synthase epsilon chain (134 aa).

It belongs to the ATPase epsilon chain family. F-type ATPases have 2 components, CF(1) - the catalytic core - and CF(0) - the membrane proton channel. CF(1) has five subunits: alpha(3), beta(3), gamma(1), delta(1), epsilon(1). CF(0) has three main subunits: a, b and c.

Its subcellular location is the cell membrane. Its function is as follows. Produces ATP from ADP in the presence of a proton gradient across the membrane. This is ATP synthase epsilon chain from Staphylococcus aureus (strain USA300).